Here is a 119-residue protein sequence, read N- to C-terminus: Protein TusC (119 aa).

This sequence belongs to the DsrF/TusC family. In terms of assembly, heterohexamer, formed by a dimer of trimers. The hexameric TusBCD complex contains 2 copies each of TusB, TusC and TusD. The TusBCD complex interacts with TusE.

Its subcellular location is the cytoplasm. Its function is as follows. Part of a sulfur-relay system required for 2-thiolation of 5-methylaminomethyl-2-thiouridine (mnm(5)s(2)U) at tRNA wobble positions. The chain is Protein TusC from Shigella flexneri serotype 5b (strain 8401).